A 158-amino-acid chain; its full sequence is Transcription elongation factor GreA (158 aa).

This sequence belongs to the GreA/GreB family.

In terms of biological role, necessary for efficient RNA polymerase transcription elongation past template-encoded arresting sites. The arresting sites in DNA have the property of trapping a certain fraction of elongating RNA polymerases that pass through, resulting in locked ternary complexes. Cleavage of the nascent transcript by cleavage factors such as GreA or GreB allows the resumption of elongation from the new 3'terminus. GreA releases sequences of 2 to 3 nucleotides. The chain is Transcription elongation factor GreA from Pelagibacter ubique (strain HTCC1062).